A 456-amino-acid polypeptide reads, in one-letter code: Histidinol dehydrogenase homolog (456 aa).

A Zn(2+)-binding site is contributed by His279. Active-site proton acceptor residues include Glu347 and His348. A Zn(2+)-binding site is contributed by His440.

It belongs to the histidinol dehydrogenase family. Requires Zn(2+) as cofactor.

This chain is Histidinol dehydrogenase homolog, found in Rhizobium meliloti (strain 1021) (Ensifer meliloti).